The following is a 329-amino-acid chain: Legumin type B (329 aa).

Disordered stretches follow at residues 47–79 (PETQ…EDGN) and 97–149 (EEDT…GRNG). Residues 99 to 112 (DTAKRLRSPRDKRN) are compositionally biased toward basic and acidic residues. A compositionally biased stretch (acidic residues) spans 129–138 (QQEEEEEEEE). A Cupin type-1 domain is found at 161–308 (ENIAQPARAD…AFGLRQRQVT (148 aa)).

The protein belongs to the 11S seed storage protein (globulins) family. Hexamer; each subunit is composed of an acidic and a basic chain derived from a single precursor and linked by a disulfide bond.

This protein found in the seeds of many leguminous and non-leguminous plants is the source of sulfur-containing amino acids in seed meals. The polypeptide is Legumin type B (LEB6) (Vicia faba (Broad bean)).